We begin with the raw amino-acid sequence, 684 residues long: Frizzled-8 (684 aa).

Residues 1–27 (MEWGYLLEVTSLLAALAVLQRSSGAAA) form the signal peptide. Over 28–271 (ASAKELACQE…NPFFSQDERA (244 aa)) the chain is Extracellular. Residues 30-151 (AKELACQEIT…GNPDTLCMDY (122 aa)) form the FZ domain. 5 disulfides stabilise this stretch: C35-C96, C43-C89, C80-C118, C107-C148, and C111-C135. An N-linked (GlcNAc...) asparagine glycan is attached at N49. 71 to 78 (QFWPLVEI) is a hexadecanoate binding site. The wnt-binding stretch occupies residues 95–100 (ICLEDY). The wnt-binding stretch occupies residues 147–152 (LCMDYN). Residue N152 is glycosylated (N-linked (GlcNAc...) asparagine). The tract at residues 155–222 (DLTTAAPSPP…KARPPGGGAA (68 aa)) is disordered. Residues 161–175 (PSPPRRLPPPQPGEQ) are compositionally biased toward pro residues. Composition is skewed to low complexity over residues 176 to 186 (PPSGSGHSRPP) and 199 to 222 (GSGDTAAAPPSRGGKARPPGGGAA). Residues 272-292 (FTVFWIGLWSVLCFVSTFATV) traverse the membrane as a helical segment. At 293–308 (STFLIDMERFKYPERP) the chain is on the cytoplasmic side. Residues 309–329 (IIFLSACYLFVSVGYLVRLVA) traverse the membrane as a helical segment. The Extracellular portion of the chain corresponds to 330 to 393 (GHEKVACSGG…RYETTGPALC (64 aa)). A helical transmembrane segment spans residues 394-414 (TVVFLLVYFFGMASSIWWVIL). The Cytoplasmic portion of the chain corresponds to 415-436 (SLTWFLAAGMKWGNEAIAGYSQ). Residues 437-457 (YFHLAAWLVPSVKSIAVLALS) traverse the membrane as a helical segment. At 458–480 (SVDGDPVAGICYVGNQSLDNLRG) the chain is on the extracellular side. N-linked (GlcNAc...) asparagine glycosylation occurs at N472. Residues 481–501 (FVLAPLVIYLFIGTMFLLAGF) form a helical membrane-spanning segment. At 502 to 529 (VSLFRIRSVIKQQGGPTKTHKLEKLMIR) the chain is on the cytoplasmic side. The chain crosses the membrane as a helical span at residues 530–550 (LGLFTVLYTVPAAVVVACLFY). Residues 551 to 581 (EQHNRPRWEATHNCPCLRDLQPDQARRPDYA) lie on the Extracellular side of the membrane. Residues 582 to 602 (VFMLKYFMCLVVGITSGVWVW) traverse the membrane as a helical segment. Topologically, residues 603–684 (SGKTLESWRA…YPKQMPLSQV (82 aa)) are cytoplasmic. A Lys-Thr-X-X-X-Trp motif, mediates interaction with the PDZ domain of Dvl family members motif is present at residues 605-610 (KTLESW). A compositionally biased stretch (gly residues) spans 630 to 654 (AGGSGPGGGGPGPGGGGGHGGGGGS). Positions 630 to 655 (AGGSGPGGGGPGPGGGGGHGGGGGSL) are disordered. The PDZ-binding signature appears at 682-684 (SQV).

It belongs to the G-protein coupled receptor Fz/Smo family. In terms of assembly, component of a Wnt-signaling complex that contains a WNT protein, a FZD protein and LRP5 or LRP6. Interacts directly with LRP5 or LRP6; the interaction is promoted by Wnt-binding and signaling and inhibited by DKK1. Interacts (via the PDZ-binding motif) with GPOC (via its PDZ domain). Interacts with RSPO1 and RSPO3. Interacts with glypican GPC3. Post-translationally, ubiquitinated by ZNRF3, leading to its degradation by the proteasome.

Its subcellular location is the membrane. The protein localises to the golgi apparatus. It is found in the cell membrane. In terms of biological role, receptor for Wnt proteins. Component of the Wnt-Fzd-LRP5-LRP6 complex that triggers beta-catenin signaling through inducing aggregation of receptor-ligand complexes into ribosome-sized signalosomes. The beta-catenin canonical signaling pathway leads to the activation of disheveled proteins, inhibition of GSK-3 kinase, nuclear accumulation of beta-catenin and activation of Wnt target genes. A second signaling pathway involving PKC and calcium fluxes has been seen for some family members, but it is not yet clear if it represents a distinct pathway or if it can be integrated in the canonical pathway, as PKC seems to be required for Wnt-mediated inactivation of GSK-3 kinase. Both pathways seem to involve interactions with G-proteins. May be involved in transduction and intercellular transmission of polarity information during tissue morphogenesis and/or in differentiated tissues. Coreceptor along with RYK of Wnt proteins, such as WNT1. This chain is Frizzled-8 (Fzd8), found in Rattus norvegicus (Rat).